Reading from the N-terminus, the 358-residue chain is Ion-translocating oxidoreductase complex subunit D (358 aa).

The next 3 membrane-spanning stretches (helical) occupy residues 24 to 44, 79 to 99, and 125 to 145; these read ILAM…GVVL, LTAL…IIII, and IGYV…MPPI. T186 is modified (FMN phosphoryl threonine). A run of 5 helical transmembrane segments spans residues 220 to 240, 248 to 268, 271 to 291, 297 to 317, and 321 to 341; these read FAQG…FLIL, IPVA…FTGF, LSAI…FIAT, SITP…VYLI, and GNYP…VPLI.

It belongs to the NqrB/RnfD family. In terms of assembly, the complex is composed of six subunits: RnfA, RnfB, RnfC, RnfD, RnfE and RnfG. FMN is required as a cofactor.

It is found in the cell inner membrane. Its function is as follows. Part of a membrane-bound complex that couples electron transfer with translocation of ions across the membrane. The chain is Ion-translocating oxidoreductase complex subunit D from Haemophilus influenzae (strain ATCC 51907 / DSM 11121 / KW20 / Rd).